We begin with the raw amino-acid sequence, 134 residues long: Arsenate reductase (134 aa).

Residues Cys11, Cys83, and Cys90 each act as nucleophile in the active site. Cystine bridges form between Cys11-Cys83 and Cys83-Cys90.

This sequence belongs to the low molecular weight phosphotyrosine protein phosphatase family. Thioredoxin-coupled ArsC subfamily.

It is found in the cytoplasm. It carries out the reaction arsenate + [thioredoxin]-dithiol + H(+) = arsenite + [thioredoxin]-disulfide + H2O. Functionally, catalyzes the reduction of arsenate [As(V)] to arsenite [As(III)]. This is Arsenate reductase from Bacillus cereus (strain G9842).